Here is a 314-residue protein sequence, read N- to C-terminus: Melanoma-associated antigen 2 (314 aa).

The span at 1–20 (MPLEQRSQHCKPEEGLEARG) shows a compositional bias: basic and acidic residues. The tract at residues 1 to 69 (MPLEQRSQHC…SPPHSPQGAS (69 aa)) is disordered. The span at 21-44 (EALGLVGAQAPATEEQQTASSSST) shows a compositional bias: low complexity. S64 is modified (phosphoserine). The 200-residue stretch at 109–308 (ISRKMVELVH…ISYPPLHERA (200 aa)) folds into the MAGE domain.

As to quaternary structure, interacts with TRIM28 and UBE2H. Interacts with HDAC3. Interacts with PML (isoform PML-1, isoform PML-2, isoform PML-3, isoform PML-4 and isoform PML-5). In terms of tissue distribution, expressed in many tumors of several types, such as melanoma, head and neck squamous cell carcinoma, lung carcinoma and breast carcinoma, but not in normal tissues except for testes.

It localises to the nucleus. It is found in the PML body. In terms of biological role, reduces p53/TP53 transactivation function through recruitment of HDAC3 to p53/TP53 transcription sites. Also represses p73/TP73 activity. Proposed to enhance ubiquitin ligase activity of RING-type zinc finger-containing E3 ubiquitin-protein ligases. In vitro enhances ubiquitin ligase activity of TRIM28 and stimulates p53/TP53 ubiquitination by TRIM28 potentially in presence of Ubl-conjugating enzyme UBE2H. Proposed to act through recruitment and/or stabilization of the Ubl-conjugating enzyme (E2) at the E3:substrate complex. May play a role in embryonal development and tumor transformation or aspects of tumor progression. In vitro promotes cell viability in melanoma cell lines. Antigen recognized on a melanoma by autologous cytolytic T-lymphocytes. Negatively regulates acetylation and sumoylation of PML and represses PML-induced p53/TP53 acetylation and activation. This chain is Melanoma-associated antigen 2 (MAGEA2), found in Homo sapiens (Human).